We begin with the raw amino-acid sequence, 491 residues long: Chromosomal replication initiator protein DnaA (491 aa).

The domain I, interacts with DnaA modulators stretch occupies residues 1–68 (MTSIWGQIQH…RTAACGVIGD (68 aa)). A domain II region spans residues 68–146 (DTVEVVVTAG…PLDWAPVPQS (79 aa)). Residues 147 to 364 (RTNWRFSFDD…SCLHNLILKA (218 aa)) are domain III, AAA+ region. Positions 190, 192, 193, and 194 each coordinate ATP. The domain IV, binds dsDNA stretch occupies residues 365–491 (KLLNRQISLE…RNGRITHARH (127 aa)).

The protein belongs to the DnaA family. As to quaternary structure, oligomerizes as a right-handed, spiral filament on DNA at oriC.

It is found in the cytoplasm. Functionally, plays an essential role in the initiation and regulation of chromosomal replication. ATP-DnaA binds to the origin of replication (oriC) to initiate formation of the DNA replication initiation complex once per cell cycle. Binds the DnaA box (a 9 base pair repeat at the origin) and separates the double-stranded (ds)DNA. Forms a right-handed helical filament on oriC DNA; dsDNA binds to the exterior of the filament while single-stranded (ss)DNA is stabiized in the filament's interior. The ATP-DnaA-oriC complex binds and stabilizes one strand of the AT-rich DNA unwinding element (DUE), permitting loading of DNA polymerase. After initiation quickly degrades to an ADP-DnaA complex that is not apt for DNA replication. Binds acidic phospholipids. The chain is Chromosomal replication initiator protein DnaA from Nitratidesulfovibrio vulgaris (strain ATCC 29579 / DSM 644 / CCUG 34227 / NCIMB 8303 / VKM B-1760 / Hildenborough) (Desulfovibrio vulgaris).